The chain runs to 246 residues: MPALSGPQYLGEGLKLIMRPGLRLFVLIPLSINLLVFALLIGFAMQQFSHWVDLLMPSLPDWLGFLQYIVWPLFVLLVLVIVFFTFTMVANIISAPFNGFLSEKVEVVVRGRDDFPPFSWAELLAMIPRTMGREMRKLAYFLPRALVLLVLSFVPGVNLVATPLWILFGIWMMAVQYIDYPADNHKLGWNEMLAWLRSKRWACMGFGGMTYLALLIPLVNLVMMPAAVAGATLFWVREEGEKALVR.

The next 4 membrane-spanning stretches (helical) occupy residues 24 to 44 (LFVL…IGFA), 69 to 89 (IVWP…FTMV), 148 to 168 (LLVL…WILF), and 214 to 234 (LLIP…ATLF).

It belongs to the CysZ family.

The protein localises to the cell inner membrane. High affinity, high specificity proton-dependent sulfate transporter, which mediates sulfate uptake. Provides the sulfur source for the cysteine synthesis pathway. In Pseudomonas paraeruginosa (strain DSM 24068 / PA7) (Pseudomonas aeruginosa (strain PA7)), this protein is Sulfate transporter CysZ.